Reading from the N-terminus, the 156-residue chain is SsrA-binding protein (156 aa).

The tract at residues 135–156 (HALRERQDRREADRAMSERKDR) is disordered.

The protein belongs to the SmpB family.

The protein localises to the cytoplasm. Its function is as follows. Required for rescue of stalled ribosomes mediated by trans-translation. Binds to transfer-messenger RNA (tmRNA), required for stable association of tmRNA with ribosomes. tmRNA and SmpB together mimic tRNA shape, replacing the anticodon stem-loop with SmpB. tmRNA is encoded by the ssrA gene; the 2 termini fold to resemble tRNA(Ala) and it encodes a 'tag peptide', a short internal open reading frame. During trans-translation Ala-aminoacylated tmRNA acts like a tRNA, entering the A-site of stalled ribosomes, displacing the stalled mRNA. The ribosome then switches to translate the ORF on the tmRNA; the nascent peptide is terminated with the 'tag peptide' encoded by the tmRNA and targeted for degradation. The ribosome is freed to recommence translation, which seems to be the essential function of trans-translation. In Kineococcus radiotolerans (strain ATCC BAA-149 / DSM 14245 / SRS30216), this protein is SsrA-binding protein.